The following is a 269-amino-acid chain: Hydroxyethylthiazole kinase (269 aa).

Position 48 (methionine 48) interacts with substrate. The ATP site is built by lysine 124 and threonine 170. Residue glycine 197 coordinates substrate.

It belongs to the Thz kinase family. Requires Mg(2+) as cofactor.

The enzyme catalyses 5-(2-hydroxyethyl)-4-methylthiazole + ATP = 4-methyl-5-(2-phosphooxyethyl)-thiazole + ADP + H(+). Its pathway is cofactor biosynthesis; thiamine diphosphate biosynthesis; 4-methyl-5-(2-phosphoethyl)-thiazole from 5-(2-hydroxyethyl)-4-methylthiazole: step 1/1. Its function is as follows. Catalyzes the phosphorylation of the hydroxyl group of 4-methyl-5-beta-hydroxyethylthiazole (THZ). The chain is Hydroxyethylthiazole kinase from Clostridium kluyveri (strain NBRC 12016).